Consider the following 63-residue polypeptide: Conotoxin p5a (63 aa).

The signal sequence occupies residues 1-19 (MRCLPVFVILLLLIPSAPC). The propeptide occupies 20–50 (VDAHPKTKDDMPLASFHDNAKGTLQRFWKKR). 2 disulfide bridges follow: Cys-52–Cys-59 and Cys-53–Cys-60. Leu-62 is subject to Leucine amide.

As to expression, expressed by the venom duct.

The protein localises to the secreted. Its function is as follows. In vivo, low levels of the peptide injected into male specimens of the Siamese fighting fish causes an immediate aggressive display in this fish in response to their reflection when placed in a mirrored aquarium; High levels of the peptide suppressed this behavior. No effect is observed when injected into mice. The protein is Conotoxin p5a of Conus purpurascens (Purple cone).